The primary structure comprises 142 residues: MKKEELKKKLSPLAYRVTQENGTEAPFTNEFDDFFEKGLYVDIVSGEPLFTSLDKYQSGCGWPAFTQPIDKKMVKEKRDKSLFMERTEVRSSNADSHLGHVFTDGPLDKGGLRYCINSAALRFIPFDQLESEGYGDYIKYFS.

A MsrB domain is found at 3–126; that stretch reads KEELKKKLSP…NSAALRFIPF (124 aa). Cys115 (nucleophile) is an active-site residue.

This sequence belongs to the MsrB Met sulfoxide reductase family.

It carries out the reaction L-methionyl-[protein] + [thioredoxin]-disulfide + H2O = L-methionyl-(R)-S-oxide-[protein] + [thioredoxin]-dithiol. The polypeptide is Peptide methionine sulfoxide reductase MsrB (Lactococcus lactis subsp. cremoris (strain SK11)).